The primary structure comprises 1493 residues: ABC transporter C family member 7 (1493 aa).

The next 10 helical transmembrane spans lie at Phe-21–Val-41, Val-70–Phe-90, Leu-102–Ile-122, Val-140–Tyr-160, Leu-165–Cys-185, Ile-309–Leu-329, Tyr-343–Val-360, Trp-423–Tyr-443, Leu-448–Ala-468, and Ser-535–Leu-555. One can recognise an ABC transmembrane type-1 1 domain in the interval Ile-309–Gln-590. The ABC transporter 1 domain occupies Val-624 to Ala-847. Gly-659–Ser-666 contributes to the ATP binding site. Residues Ala-863–Glu-898 are disordered. Position 888 is a phosphoserine (Ser-888). Helical transmembrane passes span Leu-915–Leu-935, Gly-959–Val-979, Phe-1038–Met-1055, Ala-1059–Ile-1081, Leu-1153–Ile-1173, and Phe-1177–Trp-1197. The ABC transmembrane type-1 2 domain maps to Val-922–Asn-1204. The region spanning Ile-1241 to Ala-1475 is the ABC transporter 2 domain. Gly-1275–Ser-1282 is an ATP binding site.

This sequence belongs to the ABC transporter superfamily. ABCC family. Conjugate transporter (TC 3.A.1.208) subfamily. As to expression, ubiquitous.

The protein resides in the membrane. The enzyme catalyses ATP + H2O + xenobioticSide 1 = ADP + phosphate + xenobioticSide 2.. In terms of biological role, pump for glutathione S-conjugates. In Arabidopsis thaliana (Mouse-ear cress), this protein is ABC transporter C family member 7 (ABCC7).